A 268-amino-acid chain; its full sequence is NAC domain-containing protein 41 (268 aa).

The NAC domain maps to 15–160; it reads LPPGFRFHPT…NWVLCRVFLK (146 aa). Residues 109–166 mediate DNA binding; sequence VGMKKTLVFYKGKPPNGTRTNWVLHEYRLVDSQQDSLYGQNMNWVLCRVFLKKRSNSN. The interval 166 to 190 is disordered; sequence NSKRKEDEKEEVENEKETETERERE. Basic and acidic residues predominate over residues 180–190; that stretch reads EKETETERERE.

Its subcellular location is the nucleus. In terms of biological role, transcription activator of the mannan synthase CSLA9. Recognizes and binds to DNA-specific sequence of CSLA9 promoter. This chain is NAC domain-containing protein 41, found in Arabidopsis thaliana (Mouse-ear cress).